A 1465-amino-acid chain; its full sequence is Ankyrin and armadillo repeat-containing protein (1465 aa).

A helical transmembrane segment spans residues 313-329 (MGYLKLICFLIPFLLSL). ANK repeat units lie at residues 532 to 561 (AGYA…NVNQ), 582 to 611 (NGPT…DYTL), 615 to 644 (RGWM…SLLE), 651 to 680 (NQCT…NWRK), and 684 to 714 (KGNN…ELPV). ARM repeat units lie at residues 745-784 (DRYW…NIST), 786-825 (VSIV…DVAK), 827-865 (ENKD…VLCM), 868-907 (ESNQ…EVAR), 910-949 (KEVQ…SLAN), and 1085-1125 (PMSQ…CIVL). The disordered stretch occupies residues 1431–1465 (KLGKDEQKANPDPPAFLNKLGKDEQNANPDPAESQ).

Its subcellular location is the membrane. The polypeptide is Ankyrin and armadillo repeat-containing protein (Ankar) (Mus musculus (Mouse)).